The chain runs to 366 residues: Zinc finger protein ubi-d4 B (366 aa).

Disordered stretches follow at residues 41–94 and 140–167; these read ASAP…DGSS and DDLDDEDYEEDTPKRRKGKSKGKGIGGA. The span at 76-86 shows a compositional bias: basic and acidic residues; the sequence is PDPEQMLKKEG. Acidic residues predominate over residues 140-149; that stretch reads DDLDDEDYEE. The segment at 183 to 206 adopts a C2H2-type zinc-finger fold; sequence YACDICGKRYKNRPGLSYHYAHSH. The tract at residues 211 to 243 is disordered; sequence EGAGAEDKEDSQPPTPIMHRSEEQKSKKGPDGL. Basic and acidic residues predominate over residues 229 to 240; sequence HRSEEQKSKKGP. 2 PHD-type zinc fingers span residues 247–307 and 304–354; these read NNYC…CKCC and CKCC…CLDL.

It belongs to the requiem/DPF family.

It is found in the cytoplasm. Its subcellular location is the nucleus. Its function is as follows. May be a transcription factor required for the apoptosis response following survival factor withdrawal from myeloid cells. Might also have a role in the development and maturation of lymphoid cells. This Xenopus laevis (African clawed frog) protein is Zinc finger protein ubi-d4 B (req-b).